A 167-amino-acid chain; its full sequence is Small ribosomal subunit protein uS5 (167 aa).

Residues 19 to 82 (LTEKVLHINR…EAARKNMISC (64 aa)) enclose the S5 DRBM domain.

It belongs to the universal ribosomal protein uS5 family. Part of the 30S ribosomal subunit. Contacts proteins S4 and S8.

Functionally, with S4 and S12 plays an important role in translational accuracy. Its function is as follows. Located at the back of the 30S subunit body where it stabilizes the conformation of the head with respect to the body. The sequence is that of Small ribosomal subunit protein uS5 from Protochlamydia amoebophila (strain UWE25).